Reading from the N-terminus, the 212-residue chain is uncharacterized protein (212 aa).

Residues Gly-53, Glu-74, and Asp-97 each coordinate S-adenosyl-L-methionine.

Belongs to the methyltransferase superfamily. YrrT family.

Could be a S-adenosyl-L-methionine-dependent methyltransferase. This is an uncharacterized protein from Bacillus cytotoxicus (strain DSM 22905 / CIP 110041 / 391-98 / NVH 391-98).